A 262-amino-acid polypeptide reads, in one-letter code: MTDSPADLRSAFRSGRVTPTAGLAPGFAQTNLIAVPQDWAYDVLLFTQRNPKPCPVLDVGDVGSRETVLAPGADITTDLPLYRVWKDGELADETADVSGLWRDDLVAFHIGCSFTFEHPVAAAGVPLRHVEQGSNVPMFVTNRECRPAGRMSGPMVVSMRPVPEHQVSLAAAISARMPAVHGGPVHIGDPTELGIADVAAPDFGDPVNFEPGDVPVFWACGVTPQAAVMASRLPFAITHAPGYMLITDIPDSEYVLEVPDAR.

It belongs to the D-glutamate cyclase family.

This is Putative hydro-lyase RHA1_ro03475 from Rhodococcus jostii (strain RHA1).